The primary structure comprises 377 residues: tRNA-specific 2-thiouridylase MnmA (377 aa).

ATP contacts are provided by residues 17 to 24 (GMSGGVDS) and M43. Residues 103 to 105 (NPD) form an interaction with target base in tRNA region. C108 serves as the catalytic Nucleophile. A disulfide bond links C108 and C204. An ATP-binding site is contributed by G132. Residues 154–156 (KDQ) form an interaction with tRNA region. Residue C204 is the Cysteine persulfide intermediate of the active site. Residues 316-317 (RY) form an interaction with tRNA region.

The protein belongs to the MnmA/TRMU family.

It localises to the cytoplasm. The catalysed reaction is S-sulfanyl-L-cysteinyl-[protein] + uridine(34) in tRNA + AH2 + ATP = 2-thiouridine(34) in tRNA + L-cysteinyl-[protein] + A + AMP + diphosphate + H(+). Catalyzes the 2-thiolation of uridine at the wobble position (U34) of tRNA, leading to the formation of s(2)U34. This is tRNA-specific 2-thiouridylase MnmA from Pseudomonas fluorescens (strain ATCC BAA-477 / NRRL B-23932 / Pf-5).